The primary structure comprises 384 residues: Deoxyguanosinetriphosphate triphosphohydrolase-like protein (384 aa).

A disordered region spans residues 13–42 (LASYASDPSKTRGRRHSEPPPENRTEFQRD). A compositionally biased stretch (basic and acidic residues) spans 28–42 (HSEPPPENRTEFQRD). In terms of domain architecture, HD spans 73-208 (RLTHSLEVAQ…ANLADEVAYN (136 aa)).

This sequence belongs to the dGTPase family. Type 2 subfamily.

In Bordetella bronchiseptica (strain ATCC BAA-588 / NCTC 13252 / RB50) (Alcaligenes bronchisepticus), this protein is Deoxyguanosinetriphosphate triphosphohydrolase-like protein.